We begin with the raw amino-acid sequence, 522 residues long: Zinc finger protein C25B8.19c (522 aa).

5 disordered regions span residues M1 to T25, D61 to N96, Q235 to T265, Q311 to S386, and N413 to S462. Positions A84–N96 are enriched in low complexity. Composition is skewed to polar residues over residues Q311–P321 and A335–G344. Residues N345–Q362 are compositionally biased toward low complexity. Residues N413 to N427 are compositionally biased toward polar residues. The segment covering Y428 to A438 has biased composition (basic and acidic residues). A compositionally biased stretch (low complexity) spans S453–S462. C2H2-type zinc fingers lie at residues Y468–P495 and F496–L522.

The protein localises to the nucleus. This Schizosaccharomyces pombe (strain 972 / ATCC 24843) (Fission yeast) protein is Zinc finger protein C25B8.19c.